The sequence spans 194 residues: MNLDEVITGVVLAGGKARRMGGADKGLLELGGKPLWRHVADALAPQLATVVISANRHLDIYQASGLKVIPDSIADFPGPLAGMLSVFQQVAGDWFLFCPCDNPCIPHNLVDRLAAQRHGAPVVWVHDGERDHPTIALINRAVEPQLTAYLQAGERRVMIFMRQVGGHAVDFSDCKEAFVNVNTPEELAQWQKRP.

Residues 12 to 14 (LAG), Lys-25, Asp-71, and Asp-101 contribute to the GTP site. Asp-101 lines the Mg(2+) pocket.

This sequence belongs to the MobA family. As to quaternary structure, monomer. It depends on Mg(2+) as a cofactor.

The protein localises to the cytoplasm. The enzyme catalyses Mo-molybdopterin + GTP + H(+) = Mo-molybdopterin guanine dinucleotide + diphosphate. Its function is as follows. Transfers a GMP moiety from GTP to Mo-molybdopterin (Mo-MPT) cofactor (Moco or molybdenum cofactor) to form Mo-molybdopterin guanine dinucleotide (Mo-MGD) cofactor. The polypeptide is Molybdenum cofactor guanylyltransferase (Salmonella typhimurium (strain LT2 / SGSC1412 / ATCC 700720)).